The primary structure comprises 590 residues: Cationic amino acid transporter 8, vacuolar (590 aa).

The Cytoplasmic portion of the chain corresponds to 1 to 85 (MIPASMEEAH…ESENPMRRCL (85 aa)). Residues 86–106 (TWWDLLWLSFGSVVGSGVFVI) form a helical membrane-spanning segment. Topologically, residues 107–114 (TGQEARVG) are vacuolar. Residues 115–135 (AGPAVVLSYAISGVSALLSVL) form a helical membrane-spanning segment. Over 136–160 (CYAEFGVEIPVAGGSFSYLRVELGD) the chain is Cytoplasmic. Residues 161-181 (FIAFIAAGNILLEAMVGAAGL) form a helical membrane-spanning segment. Over 182–209 (GRSWSSYLASLVKNDSDYFRIKVDSFAK) the chain is Vacuolar. N195 carries N-linked (GlcNAc...) asparagine glycosylation. Residues 210–230 (GFDLLDPVAVAVLLVANGIAM) traverse the membrane as a helical segment. The Cytoplasmic segment spans residues 231–238 (TGTKRTSW). The helical transmembrane segment at 239–259 (LNLITSMVTVCIIVFIVVVGF) threads the bilayer. Over 260–266 (THSKTSN) the chain is Vacuolar. The chain crosses the membrane as a helical span at residues 267–287 (LVPFFPYGAKGVVQSAAVVYW). The Cytoplasmic portion of the chain corresponds to 288–310 (SYTGFDMVANMAEETEKPSRDIP). Residues 311–331 (IGLVGSMSMITVVYCLMALAL) form a helical membrane-spanning segment. At 332–359 (TMMVKYTEIDANAAYSVAFAQIGMKWAK) the chain is on the vacuolar side. A helical membrane pass occupies residues 360-380 (YLVGICALKGMTTSLLVGSLG). Residues 381-407 (QARYTTQIARSHMIPPWFALVHPKTGT) lie on the Cytoplasmic side of the membrane. A helical transmembrane segment spans residues 408-428 (PIYATLLVTILSSIISFFTSL). Residue E429 is a topological domain, vacuolar. Residues 430–450 (VLSSVFSFATLFIFMLVAVAL) form a helical membrane-spanning segment. The Cytoplasmic segment spans residues 451-465 (LVRRYYVKDVTPEAG). A helical membrane pass occupies residues 466–486 (LLKFLGFLFLIIASSIGVSAL). Topologically, residues 487–493 (WNSGVKG) are vacuolar. The helical transmembrane segment at 494 to 514 (WIAYTVTGVIWFIGTLGLALL) threads the bilayer. Topologically, residues 515-522 (PKYRVPKV) are cytoplasmic. Residues 523–543 (WGVPLVPWLPSFSIAMNLFLI) traverse the membrane as a helical segment. Residues 544–553 (GSLGYVAFLR) are Vacuolar-facing. Residues 554–574 (FIICTMVMLLYYLFVGLHATY) form a helical membrane-spanning segment. Residues 575-590 (DVAHQPLEEAKFEGER) are Cytoplasmic-facing.

The protein belongs to the amino acid-polyamine-organocation (APC) superfamily. Cationic amino acid transporter (CAT) (TC 2.A.3.3) family. In terms of tissue distribution, expressed in roots, stems, flowers and leaves. Mostly present in young and rapidly dividing tissues such as the shoot and root apical meristem, and in young leaves and petioles during seedling development.

The protein resides in the cell membrane. Permease involved in the transport of the cationic neutral or acidic amino acids. The chain is Cationic amino acid transporter 8, vacuolar (CAT8) from Arabidopsis thaliana (Mouse-ear cress).